We begin with the raw amino-acid sequence, 555 residues long: Disabled homolog 1 (555 aa).

The tract at residues 1-26 (MSTETELQVAVKTSAKKDSRKKGQDR) is disordered. Positions 15–26 (AKKDSRKKGQDR) are enriched in basic and acidic residues. Positions 36 to 189 (KGEGVRYKAK…CEQAVYQTIL (154 aa)) constitute a PID domain. Residues Tyr-198, Tyr-220, and Tyr-232 each carry the phosphotyrosine modification. Disordered regions lie at residues 386–409 (PLATVPGTNDSARSSPQSDKPRQK) and 469–555 (LTPV…QDGS). A compositionally biased stretch (polar residues) spans 391–403 (PGTNDSARSSPQS). 2 stretches are compositionally biased toward low complexity: residues 470–479 (TPVTSTTPST) and 490–501 (SSPSKSSASHVS). At Ser-491 the chain carries Phosphoserine; by CDK5. Over residues 504–513 (TADDIFEEGF) the composition is skewed to acidic residues.

As to quaternary structure, associates with the SH2 domains of SRC, FYN and ABL. Interacts (phosphorylated on tyrosine residues) with CRK and CRKL (via respective SH2 domain). Interacts with SIAH1, LRP8 and VLDLR. Interacts with LRP1. Interacts with APLP1 (via NPXY motif). Interacts with DAB2IP. Interacts with ZSWIM8. Post-translationally, phosphorylated by FYN on Tyr-198 and Tyr-220 upon reelin induction in embryonic neurons. Also phosphorylated on Ser-491 independently of reelin signaling. In terms of processing, ubiquitinated by various cullin-5-RING E3 ubiquitin-protein ligase complexes (ECS complexes) following ligand-binding and phosphorylation, leading to its degradation. Ubiquitinated by the ECS(SOCS7) complex in the cortical plate of the developing cerebral cortex following ligand-binding and phosphorylation by FYN, leading to its degradation by the proteasome. Recognized by ZSWIM8 through a disorder targets misorder mechanism that eliminates misfolded DAB1 via ubiquitination and proteasomal degradation.

It is found in the cytoplasm. Its function is as follows. Signaling adapter of the reelin-mediated signaling pathway, which regulates the migration and differentiation of postmitotic neurons during brain development. Mediates intracellular transduction of Reelin signaling following reelin (RELN)-binding to its receptor: acts by docking proteins through its phosphotyrosine residues and PID domain. The polypeptide is Disabled homolog 1 (Dab1) (Rattus norvegicus (Rat)).